The following is a 220-amino-acid chain: MRGRLFVMTGASGVGKGTVRAKVLERTRLFYSISMTTRPPRPGEVDGVDYYFVDRPTFEALVREDGFLEYAEYVGHLYGTPRAPVERALSRGEDVLLEIEVQGALQVKRAVPEAVLIFLLPPSLSELKRRLVYRGKDSPEKIQKRLEQAEWEIRNAHLFDYVVVNDVLEEAVADFLAILTAERRRSGRMGEALEMALRRDLALEAELDEILRRRYGGTGH.

The region spanning 3–180 (GRLFVMTGAS…AVADFLAILT (178 aa)) is the Guanylate kinase-like domain. ATP is bound at residue 10-17 (GASGVGKG).

It belongs to the guanylate kinase family.

It is found in the cytoplasm. It catalyses the reaction GMP + ATP = GDP + ADP. Essential for recycling GMP and indirectly, cGMP. The polypeptide is Guanylate kinase (Thermus thermophilus (strain ATCC BAA-163 / DSM 7039 / HB27)).